The sequence spans 225 residues: DNA repair protein RecO (225 aa).

This sequence belongs to the RecO family.

In terms of biological role, involved in DNA repair and RecF pathway recombination. The protein is DNA repair protein RecO of Clostridium perfringens (strain ATCC 13124 / DSM 756 / JCM 1290 / NCIMB 6125 / NCTC 8237 / Type A).